A 382-amino-acid chain; its full sequence is Acetylserotonin O-methyltransferase (382 aa).

Residues Gly218, Asp241, Asp261, Met262, and Lys275 each contribute to the S-adenosyl-L-homocysteine site. His279 acts as the Proton acceptor in catalysis. Active-site residues include Glu308 and Glu347.

Belongs to the class I-like SAM-binding methyltransferase superfamily. Cation-independent O-methyltransferase family.

The protein localises to the cytoplasm. The enzyme catalyses N-acetylserotonin + S-adenosyl-L-methionine = melatonin + S-adenosyl-L-homocysteine + H(+). It functions in the pathway aromatic compound metabolism; melatonin biosynthesis; melatonin from serotonin: step 1/2. Functionally, methyltransferase which catalyzes the transfer of a methyl group onto N-acetylserotonin, producing melatonin (N-acetyl-5-methoxytryptamine). Does not seem to possess caffeate O-methyltransferase activity. Implicated in melatonin-dependent circadian dynamics of stomatal aperture to minimize night water loss and promote drought tolerance. Prevents seed germination by promoting melatonin biosynthesis. Promotes melatonin-triggered defense responses to the necrotrophic fungus Botrytis cinerea. In terms of biological role, (Microbial infection) Promotes melatonin-triggered defense responses to the necrotrophic fungus Botrytis cinerea. The polypeptide is Acetylserotonin O-methyltransferase (Arabidopsis thaliana (Mouse-ear cress)).